The primary structure comprises 336 residues: Polyadenylate-binding protein-interacting protein 12 (336 aa).

The segment at 14 to 47 is disordered; that stretch reads EAGGLISPSPPSSVTSQESGASSNNDHGGNGIHD. Residues 25–40 show a composition bias toward polar residues; it reads SSVTSQESGASSNNDH. The PAM2-like signature appears at 75–85; it reads KLNPMAKEFIP. The Bipartite nuclear localization signal motif lies at 122–134; sequence RRKKSFGQQGKRR. RRM domains follow at residues 150–225 and 247–323; these read RTVY…PSKT and RTIY…PSKT.

In terms of assembly, interacts with MPC. As to expression, expressed in roots, leaves, stems, flowers and siliques. Detected in flowers only in growing organs: gynoecium, petals, stamenal filaments, anther walls and ovules.

Its subcellular location is the nucleus. In terms of biological role, binds nucleotic acids in vitro. The polypeptide is Polyadenylate-binding protein-interacting protein 12 (CID12) (Arabidopsis thaliana (Mouse-ear cress)).